A 564-amino-acid polypeptide reads, in one-letter code: Phosphomethylpyrimidine synthase (564 aa).

Substrate contacts are provided by residues asparagine 203, methionine 232, tyrosine 261, histidine 297, 317 to 319 (SRG), 358 to 361 (DGLR), and glutamate 397. A Zn(2+)-binding site is contributed by histidine 401. Residue tyrosine 424 participates in substrate binding. Histidine 465 serves as a coordination point for Zn(2+). Residues cysteine 541, cysteine 544, and cysteine 549 each contribute to the [4Fe-4S] cluster site.

This sequence belongs to the ThiC family. The cofactor is [4Fe-4S] cluster.

It catalyses the reaction 5-amino-1-(5-phospho-beta-D-ribosyl)imidazole + S-adenosyl-L-methionine = 4-amino-2-methyl-5-(phosphooxymethyl)pyrimidine + CO + 5'-deoxyadenosine + formate + L-methionine + 3 H(+). It functions in the pathway cofactor biosynthesis; thiamine diphosphate biosynthesis. Its function is as follows. Catalyzes the synthesis of the hydroxymethylpyrimidine phosphate (HMP-P) moiety of thiamine from aminoimidazole ribotide (AIR) in a radical S-adenosyl-L-methionine (SAM)-dependent reaction. The protein is Phosphomethylpyrimidine synthase of Bacteroides fragilis (strain ATCC 25285 / DSM 2151 / CCUG 4856 / JCM 11019 / LMG 10263 / NCTC 9343 / Onslow / VPI 2553 / EN-2).